Reading from the N-terminus, the 1939-residue chain is MSSDQEMAIFGEAAPYLRKSEKERIEAQNRPFDAKTSVFVAEPKESFVKGTIQSREGGKVTVKTEAGATLTVKEDQVFPMNPPKFDKIEDMAMMTHLHEPGVLYNLKERYAAWMIYTYSGLFCVTVNPYKWLPVYNPEVVTAYRGKKRQEAPPHIFSISDNAYQFMLTDRENQSILITGESGAGKTVNTKRVIQYFATIAVTGEKKKEEPTSGKMQGTLEDQIISANPLLEAFGNAKTVRNDNSSRFGKFIRIHFGTTGKLASADIETYLLEKSRVTFQLKAERSYHIFYQITSNRKPELIEMLLITTNPYDYPFISQGEISVASIDDQEELIATDSAIDILGFTNEEKVSIYKLTGAVMHYGNLKFKQKQREEQAEPDGTEVADKAAYLQSLNSADLLKALCYPRVKVGNEYVTKGQTVEQVTNAVGALAKAVYEKMFLWMVTRINQQLDTKQPRQYFIGVLDIAGFEIFDFNSLEQLCINFTNEKLQQFFNHHMFVLEQEEYKREGIEWTFIDFGMDLAACIELIEKPMGIFSILEEECMFPKATDTSFKNKLYEQHLGKSANFQKPKPAKGKVEAHFSLIHYAGTVDYNITGWLDKNKDPLNDTVVGLYQKSALKTLAFLFSGAQTGEAEAGGTKKGGKKKGSSFQTVSALFRENLNKLMTNLRSTHPHFVRCIIPNETKTPGAMEHELVLHQLRCNGVLEGIRICRKGFPSRILYADFKQRYKVLNASAIPEGQYIDSKKASEKLLASIDIDHTQYKFGHTKVFFKAGLLGLLEEMRDDKLAQLITRTQARCRGFLARVEYQKMVERRESIFCIQYNIRAFMNVKHWPWMKLFFKIKPLLKSAESEKEMATMKEEFQKTKDELAKSEAKRKELEEKMVTLLKEKNDLQLQVQAEAEGLADAEERCDQLIKTKIQLEAKIKEVTERAEDEEEINAELTAKKRKLEDECSELKKDIDDLELTLAKVEKEKHATENKVKNLTEEMAGLDETIAKLTKEKKALQEAHQQTLDDLQAEEDKVNTLTKAKTKLEQQVDDLEGSLEQEKKLRMDLERAKRKLEGDLKLAQESIMDIENEKQQLDEKLKKKEFEISNLQSKIEDEQALAIQLQKKIKELQARIEELEEEIEAERASRAKAEKQRSDLSRELEEISERLEEAGGATSAQIEMNKKREAEFQKMRRDLEEATLQHEATAAALRKKHADSVAELGEQIDNLQRVKQKLEKEKSEMKMEIDDLASNMETVSKAKGNLEKMCRTLEDQLSELKSKEEEQQRLINDLTAQRGRLQTESGEFSRQLDEKEALVSQLSRGKQAYTQQIEELKRQLEEEIKAKNALAHALQSSRHDCDLLREQYEEEQESKAELQRALSKANTEVAQWRTKYETDAIQRTEELEEAKKKLAQRLQAAEEHVEAVNAKCASLEKTKQRLQNEVEDLMLDVERTNAACAALDKKQRNFDKILAEWKQKYEETHAELEASQKEARSLGTELFKMKNAYEESLDQLETLKRENKNLQQEISDLTEQIAEGGKRIHELEKIKKQVEQEKSEIQAALEEAEASLEHEEGKILRIQLELNQVKSEVDRKIAEKDEEIDQLKRNHVRVVESMQSMLDAEIRSRNDAIRLKKKMEGDLNEMEIQLNHANRMAAEALRNYRNTQGILKDTQIHLDDALRGQEDLKEQLAMVERRANLLQAEIEELRATLEQTERSRKVAEQELLDASERVQLLHTQNTSLINTKKKLETDISQMQGEMEDILQEARNAEEKAKKAITDAAMMAEELKKEQDTSAHLERMKKNMEQTVKDLQHRLDEAEQLALKGGKKQIQKLEARVRELEGEVESEQKRNAEAVKGLRKHERRVKELTYQTEEDRKNILRLQDLVDKLQAKVKSYKRQAEEAEEQSNTNLSKFRKLQHELEEAEERADIAESQVNKLRVKSREVHTKVISEE.

The Myosin N-terminal SH3-like domain occupies 33–82 (DAKTSVFVAEPKESFVKGTIQSREGGKVTVKTEAGATLTVKEDQVFPMNP). Thr64 and Thr69 each carry phosphothreonine. Positions 86 to 782 (DKIEDMAMMT…LLGLLEEMRD (697 aa)) constitute a Myosin motor domain. N6,N6,N6-trimethyllysine is present on Lys130. ATP is bound at residue 179 to 186 (GESGAGKT). Residue Tyr389 is modified to Phosphotyrosine. Phosphoserine is present on Ser392. Thr419 carries the post-translational modification Phosphothreonine. Phosphoserine is present on Ser625. An actin-binding region spans residues 659–681 (LNKLMTNLRSTHPHFVRCIIPNE). Residue His757 is modified to Pros-methylhistidine. Positions 761 to 775 (KFGHTKVFFKAGLLG) are actin-binding. Residues 785-814 (LAQLITRTQARCRGFLARVEYQKMVERRES) form the IQ domain. Residues 843–1939 (LLKSAESEKE…EVHTKVISEE (1097 aa)) are a coiled coil. Residues Ser1092 and Ser1096 each carry the phosphoserine modification. Disordered regions lie at residues 1126–1147 (IEAERASRAKAEKQRSDLSREL) and 1153–1172 (RLEEAGGATSAQIEMNKKRE). The span at 1128 to 1147 (AERASRAKAEKQRSDLSREL) shows a compositional bias: basic and acidic residues. A phosphoserine mark is found at Ser1162 and Ser1237. Phosphothreonine is present on Thr1241. Ser1243 is subject to Phosphoserine. Thr1255 bears the Phosphothreonine mark. Ser1261 carries the phosphoserine modification. Thr1286 carries the phosphothreonine modification. A phosphoserine mark is found at Ser1288, Ser1292, Ser1303, and Ser1306. Phosphotyrosine is present on Tyr1464. Phosphothreonine is present on Thr1467. A Phosphoserine modification is found at Ser1474. Tyr1492 carries the phosphotyrosine modification. A Phosphoserine modification is found at Ser1495. Thr1501 is subject to Phosphothreonine. Phosphoserine is present on Ser1514. Residue Thr1517 is modified to Phosphothreonine. A phosphoserine mark is found at Ser1542, Ser1554, Ser1574, Ser1600, Ser1603, Ser1714, and Ser1726. Thr1730 and Thr1736 each carry phosphothreonine. Residue Ser1739 is modified to Phosphoserine. Residues 1885-1915 (QAEEAEEQSNTNLSKFRKLQHELEEAEERAD) are disordered.

This sequence belongs to the TRAFAC class myosin-kinesin ATPase superfamily. Myosin family. As to quaternary structure, muscle myosin is a hexameric protein that consists of 2 heavy chain subunits (MHC), 2 alkali light chain subunits (MLC) and 2 regulatory light chain subunits (MLC-2). Interacts with GCSAM.

It localises to the cytoplasm. The protein resides in the myofibril. Functionally, myosins are actin-based motor molecules with ATPase activity essential for muscle contraction. The chain is Myosin-2 (MYH2) from Sus scrofa (Pig).